A 250-amino-acid chain; its full sequence is tRNA (guanine-N(1)-)-methyltransferase (250 aa).

Residues glycine 115 and 135 to 140 (LGDFVL) contribute to the S-adenosyl-L-methionine site.

The protein belongs to the RNA methyltransferase TrmD family. As to quaternary structure, homodimer.

The protein resides in the cytoplasm. It catalyses the reaction guanosine(37) in tRNA + S-adenosyl-L-methionine = N(1)-methylguanosine(37) in tRNA + S-adenosyl-L-homocysteine + H(+). Its function is as follows. Specifically methylates guanosine-37 in various tRNAs. The sequence is that of tRNA (guanine-N(1)-)-methyltransferase from Legionella pneumophila subsp. pneumophila (strain Philadelphia 1 / ATCC 33152 / DSM 7513).